The primary structure comprises 672 residues: Glycine--tRNA ligase beta subunit (672 aa).

It belongs to the class-II aminoacyl-tRNA synthetase family. As to quaternary structure, tetramer of two alpha and two beta subunits.

It localises to the cytoplasm. It catalyses the reaction tRNA(Gly) + glycine + ATP = glycyl-tRNA(Gly) + AMP + diphosphate. This is Glycine--tRNA ligase beta subunit from Thermotoga sp. (strain RQ2).